Here is a 335-residue protein sequence, read N- to C-terminus: MMVEFAPLNTPLARCLQTAAVLQWVLSFLLLVQVCIGIMVMLVLYNYWFLYIPYLVWFYYDWRTPEQGGRRWNWVQSWPVWKYFKEYFPICLVKTQDLDPGHNYIFGFHPHGIFVPGAFGNFCTKYSDFKKLFPGFTSYLHVAKIWFCFPLFREYLMSNGPVSVSKESLSHVLSKDGGGNVSIIVLGGAKEALEAHPGTFTLCIRQRKGFVKMALTHGASLVPVFSFGENDLYKQINNPKGSWLRTIQDAMYDSMGVALPLIYARGIFQHYFGIMPYRKLIYTVVGRPIPVQQTLNPTSEQIEELHQTYLEELKKLFNEHKGKYGIPEHETLVFK.

A run of 2 helical transmembrane segments spans residues 24–44 (WVLS…MLVL) and 104–124 (YIFG…NFCT). Residue asparagine 180 is glycosylated (N-linked (GlcNAc...) asparagine).

The protein belongs to the diacylglycerol acyltransferase family. Expressed at high level in kidney and stomach. Expressed at lower level in brown and white adipose tissue, uterus and liver. Not detected in small intestine.

The protein localises to the endoplasmic reticulum membrane. The catalysed reaction is a 2-acylglycerol + an acyl-CoA = a 1,2-diacylglycerol + CoA. It catalyses the reaction 2-(9Z-octadecenoyl)-glycerol + butanoyl-CoA = 1-butanoyl-2-(9Z-octadecenoyl)-glycerol + CoA. The enzyme catalyses 2-(9Z-octadecenoyl)-glycerol + octanoyl-CoA = 1-octanoyl-2-(9Z-octadecenoyl)-glycerol + CoA. It carries out the reaction 2-(9Z-octadecenoyl)-glycerol + dodecanoyl-CoA = 1-dodecanoyl-2-(9Z-octadecenoyl)-glycerol + CoA. The catalysed reaction is 2-(9Z-octadecenoyl)-glycerol + tetradecanoyl-CoA = 1-tetradecanoyl-2-(9Z-octadecenoyl)-glycerol + CoA. It catalyses the reaction 2-(9Z-octadecenoyl)-glycerol + hexadecanoyl-CoA = 1-hexadecanoyl-2-(9Z-octadecenoyl)-glycerol + CoA. The enzyme catalyses 2-(9Z-octadecenoyl)-glycerol + octadecanoyl-CoA = 1-octadecanoyl-2-(9Z-octadecenoyl)-glycerol + CoA. It carries out the reaction eicosanoyl-CoA + 2-(9Z-octadecenoyl)-glycerol = 1-eicosanoyl-2-(9Z-octadecenoyl)-glycerol + CoA. The catalysed reaction is 2-(9Z-octadecenoyl)-glycerol + (9Z)-octadecenoyl-CoA = 1,2-di-(9Z-octadecenoyl)-glycerol + CoA. It catalyses the reaction 2-(9Z-octadecenoyl)-glycerol + (9Z,12Z)-octadecadienoyl-CoA = 1-(9Z,12Z-octadecadienoyl)-2-(9Z-octadecenoyl)-glycerol + CoA. The enzyme catalyses 2-(9Z-octadecenoyl)-glycerol + (5Z,8Z,11Z,14Z)-eicosatetraenoyl-CoA = 1-(5Z,8Z,11Z,14Z-eicosatetraenoyl)-2-(9Z-octadecenoyl)-glycerol + CoA. It carries out the reaction a 2-acylglycerol + an acyl-CoA = a 1,2-diacyl-sn-glycerol + CoA. The catalysed reaction is a 2-acylglycerol + an acyl-CoA = a 2,3-diacyl-sn-glycerol + CoA. It catalyses the reaction a 1-acylglycerol + an acyl-CoA = a 1,2-diacylglycerol + CoA. The enzyme catalyses 1-dodecanoylglycerol + (9Z)-octadecenoyl-CoA = 1-dodecanoyl-2-(9Z-octadecenoyl)-glycerol + CoA. It carries out the reaction 1-tetradecanoylglycerol + (9Z)-octadecenoyl-CoA = 1-tetradecanoyl-2-(9Z-octadecenoyl)-glycerol + CoA. The catalysed reaction is 1-hexadecanoylglycerol + (9Z)-octadecenoyl-CoA = 1-hexadecanoyl-2-(9Z-octadecenoyl)-glycerol + CoA. It catalyses the reaction 1-(9Z-octadecenoyl)-glycerol + (9Z)-octadecenoyl-CoA = 1,2-di-(9Z-octadecenoyl)-glycerol + CoA. The enzyme catalyses 1-(9Z,12Z-octadecadienoyl)-glycerol + (9Z)-octadecenoyl-CoA = 1-(9Z,12Z-octadecadienoyl)-2-(9Z-octadecenoyl)-glycerol + CoA. It carries out the reaction 1-(9Z,12Z,15Z-octadecatrienoyl)-glycerol + (9Z)-octadecenoyl-CoA = 1-(9Z,12Z,15Z-octadecatrienoyl)-2-(9Z-octadecenoyl)-glycerol + CoA. The catalysed reaction is 1-(5Z,8Z,11Z,14Z-eicosatetraenoyl)-glycerol + (9Z)-octadecenoyl-CoA = 1-(5Z,8Z,11Z,14Z-eicosatetraenoyl)-2-(9Z-octadecenoyl)-glycerol + CoA. It catalyses the reaction a 1-acylglycerol + an acyl-CoA = a 1,3-diacylglycerol + CoA. The enzyme catalyses 1-dodecanoylglycerol + (9Z)-octadecenoyl-CoA = 1-dodecanoyl-3-(9Z-octadecenoyl)-glycerol + CoA. It carries out the reaction 1-hexadecanoylglycerol + (9Z)-octadecenoyl-CoA = 1-(9Z-octadecenoyl)-3-hexadecanoylglycerol + CoA. The catalysed reaction is 1-octadecanoylglycerol + (9Z)-octadecenoyl-CoA = 1-octadecanoyl-3-(9Z-octadecenoyl)-glycerol + CoA. It catalyses the reaction 1-(9Z-octadecenoyl)-sn-glycerol + (9Z)-octadecenoyl-CoA = 1,3-di-(9Z-octadecenoyl)-glycerol + CoA. The enzyme catalyses 1-(9Z,12Z-octadecadienoyl)-glycerol + (9Z)-octadecenoyl-CoA = 1-(9Z-octadecenoyl)-3-(9Z,12Z-octadecadienoyl)-glycerol + CoA. It carries out the reaction 1-(9Z,12Z,15Z-octadecatrienoyl)-glycerol + (9Z)-octadecenoyl-CoA = 1-(9Z,12Z,15Z-octadecatrienoyl)-3-(9Z-octadecenoyl)-glycerol + CoA. The catalysed reaction is a 1-acyl-sn-glycerol + an acyl-CoA = a 1,3-diacyl-sn-glycerol + CoA. It catalyses the reaction a 3-acyl-sn-glycerol + an acyl-CoA = a 1,3-diacyl-sn-glycerol + CoA. The enzyme catalyses 3-octadecanoyl-sn-glycerol + (9Z)-octadecenoyl-CoA = 1-(9Z-octadecenoyl)-3-octadecanoyl-sn-glycerol + CoA. Its pathway is glycerolipid metabolism; triacylglycerol biosynthesis. Functionally, involved in glycerolipid synthesis and lipid metabolism. Catalyzes the formation of diacylglycerol, the precursor of triacylglycerol, by transferring the acyl chain of a fatty acyl-CoA to a monoacylglycerol, mainly at the sn-1 or sn-3 positions. It uses both sn-2-monoacylglycerol (2-acylglycerol) and sn-1-monoacylglycerol (1-acyl-sn-glycerol) equally well as substrates, and uses sn-3-monoacylglycerol (3-acyl-sn-glycerol) with lower efficiency. Probably not involved in absorption of dietary fat in the small intestine. The chain is 2-acylglycerol O-acyltransferase 1 from Mus musculus (Mouse).